The sequence spans 144 residues: Large ribosomal subunit protein uL15 (144 aa).

The segment at 1 to 53 (MRLNTLSPADGSKHAPKRLGRGIGSGLGKTGGRGHKGQNSRSGGGVRRGFEGG) is disordered. A compositionally biased stretch (gly residues) spans 21–31 (RGIGSGLGKTG).

Belongs to the universal ribosomal protein uL15 family. Part of the 50S ribosomal subunit.

Functionally, binds to the 23S rRNA. The chain is Large ribosomal subunit protein uL15 from Erwinia tasmaniensis (strain DSM 17950 / CFBP 7177 / CIP 109463 / NCPPB 4357 / Et1/99).